The sequence spans 629 residues: Nicotinic receptor-associated protein 1 (629 aa).

C2 domains are found at residues Met-1–Leu-144 and Arg-162–Leu-299. Positions 33, 39, 108, 110, 122, 192, 198, 254, 256, and 274 each coordinate Ca(2+). Residues Glu-342–Leu-561 form the VWFA domain. 2 disordered regions span residues Gly-581–Tyr-600 and Ile-607–Tyr-629.

Belongs to the copine family. Interacts with nicotinic acetylcholine receptor. Ca(2+) is required as a cofactor.

It is found in the cell membrane. Exhibits calcium-dependent phospholipid binding properties. May function in membrane trafficking. Regulates synaptic levels of nicotinic acetylcholine receptor subunit lev-1 and unc-38 in the nerve cord. Involved in nicotinic acetylcholine receptor (nAChR)-mediated sensitivity to nicotine and levamisole. Affects directional sperm motility. This Caenorhabditis briggsae protein is Nicotinic receptor-associated protein 1.